The chain runs to 341 residues: S-adenosylmethionine:tRNA ribosyltransferase-isomerase (341 aa).

The protein belongs to the QueA family. As to quaternary structure, monomer.

The protein resides in the cytoplasm. It catalyses the reaction 7-aminomethyl-7-carbaguanosine(34) in tRNA + S-adenosyl-L-methionine = epoxyqueuosine(34) in tRNA + adenine + L-methionine + 2 H(+). It functions in the pathway tRNA modification; tRNA-queuosine biosynthesis. Transfers and isomerizes the ribose moiety from AdoMet to the 7-aminomethyl group of 7-deazaguanine (preQ1-tRNA) to give epoxyqueuosine (oQ-tRNA). The polypeptide is S-adenosylmethionine:tRNA ribosyltransferase-isomerase (Trichlorobacter lovleyi (strain ATCC BAA-1151 / DSM 17278 / SZ) (Geobacter lovleyi)).